The sequence spans 100 residues: Sweet protein mabinlin-4 (100 aa).

4 disulfide bridges follow: Cys-4/Cys-49, Cys-17/Cys-38, Cys-39/Cys-87, and Cys-51/Cys-95.

The protein belongs to the 2S seed storage albumins family. As to quaternary structure, heterodimer of a small A and a large B chain linked by disulfide bonds.

Functionally, heat stable 2S seed storage protein having sweetness-inducing activity. The sequence is that of Sweet protein mabinlin-4 from Capparis masaikai (Mabinlang).